Here is a 602-residue protein sequence, read N- to C-terminus: MHKYRTHNCNELKISDVGAEVKLSGWVHRRRDHGNLVFVDLRDHYGITQIVFTDQNPQLMDDASRLRYESVVTVIGKVVARSEETINNTLPTGHIEVLAGEFIVESAADTLPFVINTEKDAPEDSRLKHRFLDLRREKLHNNIMLRSQIISYIRQLMTARGFTEFQTPILTASSPEGARDFLVPSRLHPGKFYALPQAPQQFKQLLMVSGFDRYFQIAPCFRDEDARADRSPGEFYQLDIEMSFVTQEDIFSTIEPVMYELFTKFTDKKVSEAPFIRIPYNESMLKYGSDKPDLRNPIVIADVTEIFRDSDFTIFRENIKKGSIVRAIPAPYAAAQPRSFFDKMIEFAISEGAGGLGYIQFSETGEAKGPVAKFLSTQQLEDLKATANISNGDAVFFASDKKDKAAKLAGKVRIKLADELDLLEKDCFKFCWITDFPFYELNEETGKIDFSHNPFSMPQGGLEALENAKTTEELLELTAYQYDIVCNGIELSSGAVRNHKPEIMYKAFAIAGYSEEEVDKRFGGMIRAFKFGAPPHGGIAPGIDRIVMLLAEATNIREIIAFPLNQQAEDLLMNAPNYVEDKALKELNVMLSPSARKNAEKE.

Glutamate 176 is a binding site for L-aspartate. An aspartate region spans residues 200-203 (QQFK). L-aspartate is bound by residues arginine 222 and histidine 452. 222-224 (RDE) provides a ligand contact to ATP. ATP is bound at residue glutamate 490. Position 497 (arginine 497) interacts with L-aspartate. Residue 542–545 (GIDR) participates in ATP binding.

The protein belongs to the class-II aminoacyl-tRNA synthetase family. Type 1 subfamily. In terms of assembly, homodimer.

The protein localises to the cytoplasm. The catalysed reaction is tRNA(Asx) + L-aspartate + ATP = L-aspartyl-tRNA(Asx) + AMP + diphosphate. Its function is as follows. Aspartyl-tRNA synthetase with relaxed tRNA specificity since it is able to aspartylate not only its cognate tRNA(Asp) but also tRNA(Asn). Reaction proceeds in two steps: L-aspartate is first activated by ATP to form Asp-AMP and then transferred to the acceptor end of tRNA(Asp/Asn). The protein is Aspartate--tRNA(Asp/Asn) ligase of Rickettsia bellii (strain OSU 85-389).